The sequence spans 319 residues: MSLNFLDFEQPIAELEAKIDSLTAVSRQDEKLDINIDEEVHRLREKSVELTRKIFADLGAWQVAQLARHPQRPYTLDYVRLAFDEFDELAGDRAYADDKAIVGGIARLDGRPVMIIGHQKGRETKEKIRRNFGMPAPEGYRKALRLMEMAERFNMPIITFIDTPGAYPGVGAEERGQSEAIARNLREMSRLSVPVICTVIGEGGSGGALAIGVGDKVNMLQYSTYSVISPEGCASILWKSADKAPLAAEAMGIIAPRLKELKLIDSIIQEPLGGAHRNPEAMAASLKAQLLADLADLDVLSKDDLKNRRYQRLMSYGYA.

Residues 35–296 (NIDEEVHRLR…KAQLLADLAD (262 aa)) form the CoA carboxyltransferase C-terminal domain.

It belongs to the AccA family. Acetyl-CoA carboxylase is a heterohexamer composed of biotin carboxyl carrier protein (AccB), biotin carboxylase (AccC) and two subunits each of ACCase subunit alpha (AccA) and ACCase subunit beta (AccD).

Its subcellular location is the cytoplasm. It carries out the reaction N(6)-carboxybiotinyl-L-lysyl-[protein] + acetyl-CoA = N(6)-biotinyl-L-lysyl-[protein] + malonyl-CoA. It participates in lipid metabolism; malonyl-CoA biosynthesis; malonyl-CoA from acetyl-CoA: step 1/1. In terms of biological role, component of the acetyl coenzyme A carboxylase (ACC) complex. First, biotin carboxylase catalyzes the carboxylation of biotin on its carrier protein (BCCP) and then the CO(2) group is transferred by the carboxyltransferase to acetyl-CoA to form malonyl-CoA. This Citrobacter koseri (strain ATCC BAA-895 / CDC 4225-83 / SGSC4696) protein is Acetyl-coenzyme A carboxylase carboxyl transferase subunit alpha.